Here is a 409-residue protein sequence, read N- to C-terminus: uncharacterized protein (409 aa).

The N-terminal stretch at 1–26 (MKKELLASLVLCLSLSPLVSTNEVFA) is a signal peptide.

This is an uncharacterized protein from Bacillus subtilis (strain 168).